Here is a 465-residue protein sequence, read N- to C-terminus: MKLWGGRFKKGTDELVNDFNSSINIDSRMYKEDIEGSLAHATMLGEQNIISKEASLKITSGLLEILKRMDNNVINVDLTSEDIHSFVESTLTYYIGEYGKMLHTARSRNDQVTLDLKLYLKKALVKLRKDILYLEKVLLEKSKEHISTIMPGYTHMQKAQPITLSHHLLAYAEMFKRDIGRINDAYKRTDSMPLGSGALATSTYPIDRYMVAKDLGFSTITLNSLDSVSDRDYVIETLSALSLIMMHLSRFSEEIILWCTGEFNFVELDDGYSTGSSIMPQKKNPDVAELIRGKTGRVYGDLITLLTVMKGIPLAYNKDMQEDKEALFDALDTVTLSLKTFAGMIKTMKVNKDNMKKSAALGFTNATDLADYLVKKGSYFRDAHGIVGQIVLQCIKDNKMIEDLTLAELKEYSPTFEEDVYEAINLYTCVEERKVIGGPSSESVKFQIKELQEFIHQFKGDEMYD.

Belongs to the lyase 1 family. Argininosuccinate lyase subfamily.

It is found in the cytoplasm. The catalysed reaction is 2-(N(omega)-L-arginino)succinate = fumarate + L-arginine. It participates in amino-acid biosynthesis; L-arginine biosynthesis; L-arginine from L-ornithine and carbamoyl phosphate: step 3/3. The chain is Argininosuccinate lyase from Clostridium botulinum (strain Eklund 17B / Type B).